Here is a 318-residue protein sequence, read N- to C-terminus: GTP cyclohydrolase MptA (318 aa).

Belongs to the GTP cyclohydrolase IV family. Homodimer. Requires Fe(2+) as cofactor.

It catalyses the reaction GTP + H2O = 7,8-dihydroneopterin 2',3'-cyclic phosphate + formate + diphosphate + H(+). It functions in the pathway cofactor biosynthesis; 5,6,7,8-tetrahydromethanopterin biosynthesis. Functionally, converts GTP to 7,8-dihydro-D-neopterin 2',3'-cyclic phosphate, the first intermediate in the biosynthesis of coenzyme methanopterin. In Methanothermobacter thermautotrophicus (strain ATCC 29096 / DSM 1053 / JCM 10044 / NBRC 100330 / Delta H) (Methanobacterium thermoautotrophicum), this protein is GTP cyclohydrolase MptA.